The chain runs to 139 residues: D-ribose pyranase (139 aa).

Histidine 20 (proton donor) is an active-site residue. Substrate is bound by residues aspartate 28, histidine 106, and 128–130; that span reads YAN.

The protein belongs to the RbsD / FucU family. RbsD subfamily. Homodecamer.

Its subcellular location is the cytoplasm. The catalysed reaction is beta-D-ribopyranose = beta-D-ribofuranose. The protein operates within carbohydrate metabolism; D-ribose degradation; D-ribose 5-phosphate from beta-D-ribopyranose: step 1/2. Catalyzes the interconversion of beta-pyran and beta-furan forms of D-ribose. The polypeptide is D-ribose pyranase (Photobacterium profundum (strain SS9)).